The primary structure comprises 127 residues: Aspartate 1-decarboxylase (127 aa).

The active-site Schiff-base intermediate with substrate; via pyruvic acid is the S25. The residue at position 25 (S25) is a Pyruvic acid (Ser). T57 contributes to the substrate binding site. The active-site Proton donor is Y58. 73 to 75 is a substrate binding site; the sequence is GAA.

It belongs to the PanD family. Heterooctamer of four alpha and four beta subunits. Requires pyruvate as cofactor. In terms of processing, is synthesized initially as an inactive proenzyme, which is activated by self-cleavage at a specific serine bond to produce a beta-subunit with a hydroxyl group at its C-terminus and an alpha-subunit with a pyruvoyl group at its N-terminus.

It is found in the cytoplasm. It catalyses the reaction L-aspartate + H(+) = beta-alanine + CO2. The protein operates within cofactor biosynthesis; (R)-pantothenate biosynthesis; beta-alanine from L-aspartate: step 1/1. Its function is as follows. Catalyzes the pyruvoyl-dependent decarboxylation of aspartate to produce beta-alanine. This chain is Aspartate 1-decarboxylase, found in Listeria monocytogenes serovar 1/2a (strain ATCC BAA-679 / EGD-e).